Here is a 320-residue protein sequence, read N- to C-terminus: Lipoyl synthase (320 aa).

Positions 67, 72, 78, 93, 97, 100, and 307 each coordinate [4Fe-4S] cluster. Positions 79–296 constitute a Radical SAM core domain; the sequence is FNHGTATFMI…RDKANEMGFE (218 aa).

Belongs to the radical SAM superfamily. Lipoyl synthase family. [4Fe-4S] cluster serves as cofactor.

The protein resides in the cytoplasm. It carries out the reaction [[Fe-S] cluster scaffold protein carrying a second [4Fe-4S](2+) cluster] + N(6)-octanoyl-L-lysyl-[protein] + 2 oxidized [2Fe-2S]-[ferredoxin] + 2 S-adenosyl-L-methionine + 4 H(+) = [[Fe-S] cluster scaffold protein] + N(6)-[(R)-dihydrolipoyl]-L-lysyl-[protein] + 4 Fe(3+) + 2 hydrogen sulfide + 2 5'-deoxyadenosine + 2 L-methionine + 2 reduced [2Fe-2S]-[ferredoxin]. Its pathway is protein modification; protein lipoylation via endogenous pathway; protein N(6)-(lipoyl)lysine from octanoyl-[acyl-carrier-protein]: step 2/2. Catalyzes the radical-mediated insertion of two sulfur atoms into the C-6 and C-8 positions of the octanoyl moiety bound to the lipoyl domains of lipoate-dependent enzymes, thereby converting the octanoylated domains into lipoylated derivatives. The protein is Lipoyl synthase of Haemophilus influenzae (strain PittEE).